Here is a 117-residue protein sequence, read N- to C-terminus: Large ribosomal subunit protein bL17 (117 aa).

It belongs to the bacterial ribosomal protein bL17 family. Part of the 50S ribosomal subunit. Contacts protein L32.

The protein is Large ribosomal subunit protein bL17 of Coprothermobacter proteolyticus (strain ATCC 35245 / DSM 5265 / OCM 4 / BT).